A 64-amino-acid chain; its full sequence is Large ribosomal subunit protein bL35 (64 aa).

Positions methionine 1–valine 55 are disordered. The span at lysine 23–lysine 35 shows a compositional bias: basic residues.

Belongs to the bacterial ribosomal protein bL35 family.

The sequence is that of Large ribosomal subunit protein bL35 from Chlamydia pneumoniae (Chlamydophila pneumoniae).